The following is a 156-amino-acid chain: 6,7-dimethyl-8-ribityllumazine synthase (156 aa).

Residues Phe22, 57–59, and 81–83 each bind 5-amino-6-(D-ribitylamino)uracil; these read AYE and TVI. 86–87 is a (2S)-2-hydroxy-3-oxobutyl phosphate binding site; that stretch reads GT. His89 serves as the catalytic Proton donor. Residue Phe114 participates in 5-amino-6-(D-ribitylamino)uracil binding. Arg128 lines the (2S)-2-hydroxy-3-oxobutyl phosphate pocket.

Belongs to the DMRL synthase family. As to quaternary structure, forms an icosahedral capsid composed of 60 subunits, arranged as a dodecamer of pentamers.

The catalysed reaction is (2S)-2-hydroxy-3-oxobutyl phosphate + 5-amino-6-(D-ribitylamino)uracil = 6,7-dimethyl-8-(1-D-ribityl)lumazine + phosphate + 2 H2O + H(+). Its pathway is cofactor biosynthesis; riboflavin biosynthesis; riboflavin from 2-hydroxy-3-oxobutyl phosphate and 5-amino-6-(D-ribitylamino)uracil: step 1/2. In terms of biological role, catalyzes the formation of 6,7-dimethyl-8-ribityllumazine by condensation of 5-amino-6-(D-ribitylamino)uracil with 3,4-dihydroxy-2-butanone 4-phosphate. This is the penultimate step in the biosynthesis of riboflavin. In Photorhabdus laumondii subsp. laumondii (strain DSM 15139 / CIP 105565 / TT01) (Photorhabdus luminescens subsp. laumondii), this protein is 6,7-dimethyl-8-ribityllumazine synthase.